We begin with the raw amino-acid sequence, 443 residues long: Mitochondrial distribution and morphology protein 10 (443 aa).

It belongs to the MDM10 family. In terms of assembly, component of the ER-mitochondria encounter structure (ERMES) or MDM complex, composed of MMM1, MDM10, MDM12 and MDM34. Associates with the mitochondrial outer membrane sorting assembly machinery SAM(core) complex.

The protein localises to the mitochondrion outer membrane. Functionally, component of the ERMES/MDM complex, which serves as a molecular tether to connect the endoplasmic reticulum and mitochondria. Components of this complex are involved in the control of mitochondrial shape and protein biogenesis and may function in phospholipid exchange. MDM10 is involved in the late assembly steps of the general translocase of the mitochondrial outer membrane (TOM complex). Functions in the TOM40-specific route of the assembly of outer membrane beta-barrel proteins, including the association of TOM40 with the receptor TOM22 and small TOM proteins. Can associate with the SAM(core) complex as well as the MDM12-MMM1 complex, both involved in late steps of the major beta-barrel assembly pathway, that is responsible for biogenesis of all outer membrane beta-barrel proteins. May act as a switch that shuttles between both complexes and channels precursor proteins into the TOM40-specific pathway. Plays a role in mitochondrial morphology and in the inheritance of mitochondria. This chain is Mitochondrial distribution and morphology protein 10, found in Pyricularia oryzae (strain 70-15 / ATCC MYA-4617 / FGSC 8958) (Rice blast fungus).